A 112-amino-acid chain; its full sequence is Large ribosomal subunit protein uL24 (112 aa).

Residues 92 to 112 form a disordered region; sequence ERDGKQKTVRVRVSKSTGKDL.

Belongs to the universal ribosomal protein uL24 family. As to quaternary structure, part of the 50S ribosomal subunit.

One of two assembly initiator proteins, it binds directly to the 5'-end of the 23S rRNA, where it nucleates assembly of the 50S subunit. Functionally, one of the proteins that surrounds the polypeptide exit tunnel on the outside of the subunit. This is Large ribosomal subunit protein uL24 from Kocuria rhizophila (strain ATCC 9341 / DSM 348 / NBRC 103217 / DC2201).